Consider the following 88-residue polypeptide: Elongation factor 1-beta (88 aa).

The protein belongs to the EF-1-beta/EF-1-delta family.

Functionally, promotes the exchange of GDP for GTP in EF-1-alpha/GDP, thus allowing the regeneration of EF-1-alpha/GTP that could then be used to form the ternary complex EF-1-alpha/GTP/AAtRNA. The polypeptide is Elongation factor 1-beta (Methanosphaera stadtmanae (strain ATCC 43021 / DSM 3091 / JCM 11832 / MCB-3)).